Here is a 766-residue protein sequence, read N- to C-terminus: Pentatricopeptide repeat-containing protein At3g61520, mitochondrial (766 aa).

The transit peptide at 1–30 directs the protein to the mitochondrion; that stretch reads MSIMLSISRRRNSYILLNHSRFLRRFSYDV. PPR repeat units follow at residues 151–181, 184–218, 221–257, 258–292, 293–327, 328–358, 369–404, 405–439, 440–474, 475–509, 510–544, 545–579, 580–614, 615–650, 651–685, and 686–720; these read TVVA…LDSN, NSQV…ESVF, NRIT…GVSP, NSVW…KTPL, EAPP…KIRP, DVVT…MRGK, DSIH…RCAP, NAVT…EIKP, NVVT…GVKG, NVVT…GCSP, DAKI…GFSL, DLLA…GKKP, DSIT…GLDP, TVTT…KVNP, NTVI…MVRP, and NVET…SCEP.

It belongs to the PPR family. P subfamily.

The protein resides in the mitochondrion. In Arabidopsis thaliana (Mouse-ear cress), this protein is Pentatricopeptide repeat-containing protein At3g61520, mitochondrial.